Here is a 619-residue protein sequence, read N- to C-terminus: TOX high mobility group box family member 4 (619 aa).

2 disordered regions span residues 153-227 (LGLS…QKPV) and 304-337 (DMDP…PPAL). T176 bears the Phosphothreonine mark. A phosphoserine mark is found at S178, S181, and S182. Residues 183 to 193 (LHEDGVEEFRR) show a composition bias toward basic and acidic residues. A compositionally biased stretch (basic residues) spans 208–218 (KQKAPKKRKKK). The Nuclear localization signal motif lies at 213–218 (KKRKKK). Residues 223-291 (PQKPVSAYAL…EYLKALAAYK (69 aa)) constitute a DNA-binding region (HMG box). Residues 307-319 (PAPPSQTPSPPPV) show a composition bias toward pro residues. T313 is modified (phosphothreonine). S315 is modified (phosphoserine). Low complexity predominate over residues 320 to 337 (AAADPASPAPASTEPPAL). Residue R479 is modified to Asymmetric dimethylarginine. Residues 507–529 (PPPVESSPEQPVNNSPETHTVEE) form a disordered region. Residues 512 to 524 (SSPEQPVNNSPET) are compositionally biased toward low complexity. Phosphoserine is present on residues S548, S550, S558, S560, and S565.

As to quaternary structure, component of the PNUTS-PP1 phosphatase complex, composed of PPP1R10/PNUTS, TOX4, WDR82 and PPP1CA or PPP1CB or PPP1CC. Interacts with PPP1R10/PNUTS. Interacts with FOXO1 and CREB1 (increased by cAMP); FOXO1 and CREB1 are required for full induction of TOX4-dependent activity and the interactions are inhibited by insulin.

It localises to the nucleus. It is found in the chromosome. Its activity is regulated as follows. In liver, recruited to target gene promoters following treatment with dexamethasone and cAMP. Binding is decreased in presence of insulin. In terms of biological role, transcription factor that modulates cell fate reprogramming from the somatic state to the pluripotent and neuronal fate. In liver, controls the expression of hormone-regulated gluconeogenic genes such as G6PC1 and PCK1. This regulation is independent of the insulin receptor activation. Also acts as a regulatory component of protein phosphatase 1 (PP1) complexes. Component of the PNUTS-PP1 protein phosphatase complex, a PP1 complex that regulates RNA polymerase II transcription pause-release. PNUTS-PP1 also plays a role in the control of chromatin structure and cell cycle progression during the transition from mitosis into interphase. This chain is TOX high mobility group box family member 4 (TOX4), found in Bos taurus (Bovine).